The sequence spans 784 residues: MPRKASSTSDSRLKWRKWKRNPTASPSPSNRSSAAAAAADHSDDSDSAAVNEDDDSAVPEDADDETLAGAEDPVLDLREAEVLPSAEPVSAFPVATRRVVNRPHPSVLAVIAAERSACAGEGSAAVAAAPVLENISYGQQQVLSGVLPDHASLATDTDKPSTYVCTPPNLMEGHGVTKQFQGRLHVVPKHSDWFSPGIVHRLERQVVPQFFSGKSPGNTPEKYMLLRNKVIAKYLENPSKRLAFAECQGLVANTAELYDLSRIVRFLDTWGIINYLASGSVHRGLRMATSLLREEPTGELQLLTAPLKSIDGLILFDRPKCNLQAEDISSLASNSEVVDFDAGLAELDGKIRERLSESSCSYCLQPLTSLHYQSLKEADIALCSDCFHDARYITGHSSLDFQRIDGDNDRSENDGDSWTDQETLLLLEGIEKYNDNWNNIAEHVGTKSKAQCIYHFIRLPVEDGLLENIEVPDASVPFRAETNGYPHLDCNGSTSGNLPQKIPPDNQLPFINSSNPVMSLVGFLASAMGPRVAASCASAALSVLTVDDDSRVNSEGICSDSRGQGPHPNFRDHNGGVSSSISPEKVKHAAMCGLSAAATKAKLFADQEEREIQRLTATVINHQLKRLELKLKQFAEVETLLLKECEQVERIRQRIASDRVRIVSTRLASPGNSLPGGSTSTMSSNPMSMSPRPMGVPGSMPQSSMPAPFANNMQGHGHPQMAFLQQQQRQQMLSFGPRLPLSAIQTQPSPQTSNIMFNPGMPNSVTPNHHQLLRSSSGNNSSVG.

Residues 1 to 10 are compositionally biased toward polar residues; it reads MPRKASSTSD. Residues 1 to 68 are disordered; it reads MPRKASSTSD…PEDADDETLA (68 aa). The span at 24–39 shows a compositional bias: low complexity; the sequence is ASPSPSNRSSAAAAAA. The segment covering 43 to 66 has biased composition (acidic residues); sequence DDSDSAAVNEDDDSAVPEDADDET. The SWIRM domain occupies 185 to 284; that stretch reads HVVPKHSDWF…YLASGSVHRG (100 aa). The ZZ-type; degenerate zinc finger occupies 355 to 409; it reads LSESSCSYCLQPLTSLHYQSLKEADIALCSDCFHDARYITGHSSLDFQRIDGDND. Zn(2+) contacts are provided by C360, C363, C383, and C386. The SANT domain maps to 413–464; that stretch reads NDGDSWTDQETLLLLEGIEKYNDNWNNIAEHVGTKSKAQCIYHFIRLPVEDG. Disordered stretches follow at residues 667 to 702 and 760 to 784; these read LASPGNSLPGGSTSTMSSNPMSMSPRPMGVPGSMPQ and GMPNSVTPNHHQLLRSSSGNNSSVG. Residues 675–695 show a composition bias toward low complexity; sequence PGGSTSTMSSNPMSMSPRPMG.

Interacts with LFR. Interacts with NMCP1.

Its subcellular location is the nucleus. It is found in the nucleoplasm. Component of a multiprotein complex equivalent of the SWI/SNF complex, an ATP-dependent chromatin-remodeling complex, which is required for the positive and negative regulation of gene expression of a large number of genes. It changes chromatin structure by altering DNA-histone contacts within a nucleosome, leading eventually to a change in nucleosome position, thus facilitating or repressing binding of gene-specific transcription factors. May be involved in positive response to drought stress and modulation of root growth through its interaction with NMCP1. The polypeptide is SWI/SNF complex subunit SWI3C homolog (Oryza sativa subsp. japonica (Rice)).